A 364-amino-acid chain; its full sequence is Chorismate synthase (364 aa).

Arginine 48 and arginine 54 together coordinate NADP(+). FMN-binding positions include 130 to 132 (RSS), 242 to 243 (NA), glycine 287, 302 to 306 (KPTSS), and arginine 328.

It belongs to the chorismate synthase family. As to quaternary structure, homotetramer. FMNH2 serves as cofactor.

The catalysed reaction is 5-O-(1-carboxyvinyl)-3-phosphoshikimate = chorismate + phosphate. It participates in metabolic intermediate biosynthesis; chorismate biosynthesis; chorismate from D-erythrose 4-phosphate and phosphoenolpyruvate: step 7/7. Functionally, catalyzes the anti-1,4-elimination of the C-3 phosphate and the C-6 proR hydrogen from 5-enolpyruvylshikimate-3-phosphate (EPSP) to yield chorismate, which is the branch point compound that serves as the starting substrate for the three terminal pathways of aromatic amino acid biosynthesis. This reaction introduces a second double bond into the aromatic ring system. This chain is Chorismate synthase, found in Allorhizobium ampelinum (strain ATCC BAA-846 / DSM 112012 / S4) (Agrobacterium vitis (strain S4)).